The sequence spans 27 residues: Secretin (27 aa).

Val27 is subject to Valine amide.

Belongs to the glucagon family.

Its subcellular location is the secreted. In terms of biological role, hormone involved in different processes, such as regulation of the pH of the duodenal content, food intake and water homeostasis. Exerts its biological effects by binding to secretin receptor (SCTR), a G-protein coupled receptor expressed in the basolateral domain of several cells. Acts as a key gastrointestinal hormone by regulating the pH of the duodenal content. Secreted by S cells of the duodenum in the crypts of Lieberkuehn and regulates the pH of the duodenum by (1) inhibiting the secretion of gastric acid from the parietal cells of the stomach and (2) stimulating the production of bicarbonate (NaHCO(3)) from the ductal cells of the pancreas. Production of bicarbonate is essential to neutralize the pH and ensure no damage is done to the small intestine by the gastric acid. In addition to regulating the pH of the duodenal content, plays a central role in diet induced thermogenesis: acts as a non-sympathetic brown fat (BAT) activator mediating prandial thermogenesis, which consequentially induces satiation. Mechanistically, secretin released by the gut after a meal binds to secretin receptor (SCTR) in brown adipocytes, activating brown fat thermogenesis by stimulating lipolysis, which is sensed in the brain and promotes satiation. Also able to stimulate lipolysis in white adipocytes. Also plays an important role in cellular osmoregulation: released into the systemic circulation in response to hyperosmolality and acts at different levels in the hypothalamus, pituitary and kidney to regulate water homeostasis. Also plays a role in the central nervous system, possibly by acting as a neuropeptide hormone: required for hippocampal synaptic function and neural progenitor cells maintenance. This chain is Secretin, found in Bos taurus (Bovine).